A 416-amino-acid polypeptide reads, in one-letter code: uncharacterized protein (416 aa).

9 helical membrane-spanning segments follow: residues Leu5 to Leu25, Ile84 to Val104, Ala128 to Ile148, Leu160 to Trp180, Val192 to Phe212, Pro237 to Leu257, Phe263 to Leu283, Leu288 to Thr308, and Ile312 to Ile332.

The protein belongs to the glycosyltransferase 83 family.

The protein localises to the cell membrane. This is an uncharacterized protein from Aquifex aeolicus (strain VF5).